Reading from the N-terminus, the 368-residue chain is Phosphoserine aminotransferase (368 aa).

Position 42 (Arg-42) interacts with L-glutamate. Residues 76-77 (AS), Trp-102, Thr-152, Asp-179, and Gln-202 contribute to the pyridoxal 5'-phosphate site. At Lys-203 the chain carries N6-(pyridoxal phosphate)lysine. Pyridoxal 5'-phosphate is bound at residue 245 to 246 (NT).

Belongs to the class-V pyridoxal-phosphate-dependent aminotransferase family. SerC subfamily. In terms of assembly, homodimer. It depends on pyridoxal 5'-phosphate as a cofactor.

Its subcellular location is the cytoplasm. The catalysed reaction is O-phospho-L-serine + 2-oxoglutarate = 3-phosphooxypyruvate + L-glutamate. The enzyme catalyses 4-(phosphooxy)-L-threonine + 2-oxoglutarate = (R)-3-hydroxy-2-oxo-4-phosphooxybutanoate + L-glutamate. It participates in amino-acid biosynthesis; L-serine biosynthesis; L-serine from 3-phospho-D-glycerate: step 2/3. Its pathway is cofactor biosynthesis; pyridoxine 5'-phosphate biosynthesis; pyridoxine 5'-phosphate from D-erythrose 4-phosphate: step 3/5. Functionally, catalyzes the reversible conversion of 3-phosphohydroxypyruvate to phosphoserine and of 3-hydroxy-2-oxo-4-phosphonooxybutanoate to phosphohydroxythreonine. The chain is Phosphoserine aminotransferase from Nitrosomonas europaea (strain ATCC 19718 / CIP 103999 / KCTC 2705 / NBRC 14298).